The chain runs to 382 residues: V-type proton ATPase subunit C 1 (382 aa).

An N-acetylthreonine modification is found at threonine 2.

Belongs to the V-ATPase C subunit family. V-ATPase is a heteromultimeric enzyme made up of two complexes: the ATP-hydrolytic V1 complex and the proton translocation V0 complex. The V1 complex consists of three catalytic AB heterodimers that form a heterohexamer, three peripheral stalks each consisting of EG heterodimers, one central rotor including subunits D and F, and the regulatory subunits C and H. The proton translocation complex V0 consists of the proton transport subunit a, a ring of proteolipid subunits c9c'', rotary subunit d, subunits e and f, and two accessory subunits.

In terms of biological role, subunit of the V1 complex of vacuolar(H+)-ATPase (V-ATPase), a multisubunit enzyme composed of a peripheral complex (V1) that hydrolyzes ATP and a membrane integral complex (V0) that translocates protons. V-ATPase is responsible for acidifying and maintaining the pH of intracellular compartments and in some cell types, is targeted to the plasma membrane, where it is responsible for acidifying the extracellular environment. Subunit C is necessary for the assembly of the catalytic sector of the enzyme and is likely to have a specific function in its catalytic activity. This chain is V-type proton ATPase subunit C 1 (atp6v1c1), found in Xenopus laevis (African clawed frog).